The primary structure comprises 90 residues: MNKTDLIDAIANAAELNKKQAKAALEATLDAITASLKEGEPVQLIGFGTFKVNERAARTGRNPQTGAEIQIAASKVPAFVSGKALKDAIK.

The protein belongs to the bacterial histone-like protein family. In terms of assembly, homodimer.

In terms of biological role, histone-like DNA-binding protein which is capable of wrapping DNA to stabilize it, and thus to prevent its denaturation under extreme environmental conditions. The chain is DNA-binding protein HU (hup) from Haemophilus influenzae (strain ATCC 51907 / DSM 11121 / KW20 / Rd).